Consider the following 291-residue polypeptide: G1/S-specific cyclin-D2 (291 aa).

Residues 264 to 291 (QQQQSNPSKTIEELDQASTPTDVRDINL) are disordered. Thr-282 is subject to Phosphothreonine.

Belongs to the cyclin family. Cyclin D subfamily. As to quaternary structure, interacts with the CDK4 and CDK6 protein kinases to form a serine/threonine kinase holoenzyme complex. The cyclin subunit imparts substrate specificity to the complex. Phosphorylation at Thr-282 by MAP kinases is required for ubiquitination and degradation by the DCX(AMBRA1) complex. Post-translationally, ubiquitinated by the DCX(AMBRA1) complex during the transition from G1 to S cell phase, leading to its degradation: ubiquitination is dependent on Thr-282 phosphorylation. The DCX(AMBRA1) complex represents the major regulator of CCND2 stability during the G1/S transition.

The protein localises to the nucleus. It localises to the cytoplasm. The protein resides in the nucleus membrane. Functionally, regulatory component of the cyclin D2-CDK4 (DC) complex that phosphorylates and inhibits members of the retinoblastoma (RB) protein family including RB1 and regulates the cell-cycle during G(1)/S transition. Phosphorylation of RB1 allows dissociation of the transcription factor E2F from the RB/E2F complex and the subsequent transcription of E2F target genes which are responsible for the progression through the G(1) phase. Hypophosphorylates RB1 in early G(1) phase. Cyclin D-CDK4 complexes are major integrators of various mitogenenic and antimitogenic signals. In Gallus gallus (Chicken), this protein is G1/S-specific cyclin-D2 (CCND2).